The sequence spans 155 residues: Small ribosomal subunit protein uS7c (155 aa).

This sequence belongs to the universal ribosomal protein uS7 family. In terms of assembly, part of the 30S ribosomal subunit.

The protein localises to the plastid. It is found in the chloroplast. Functionally, one of the primary rRNA binding proteins, it binds directly to 16S rRNA where it nucleates assembly of the head domain of the 30S subunit. In Staurastrum punctulatum (Green alga), this protein is Small ribosomal subunit protein uS7c (rps7).